The chain runs to 398 residues: Ornithine aminotransferase (398 aa).

K256 carries the post-translational modification N6-(pyridoxal phosphate)lysine.

It belongs to the class-III pyridoxal-phosphate-dependent aminotransferase family. OAT subfamily. The cofactor is pyridoxal 5'-phosphate.

Its subcellular location is the cytoplasm. The catalysed reaction is a 2-oxocarboxylate + L-ornithine = L-glutamate 5-semialdehyde + an L-alpha-amino acid. Its pathway is amino-acid biosynthesis; L-proline biosynthesis; L-glutamate 5-semialdehyde from L-ornithine: step 1/1. Functionally, catalyzes the interconversion of ornithine to glutamate semialdehyde. This chain is Ornithine aminotransferase, found in Oceanobacillus iheyensis (strain DSM 14371 / CIP 107618 / JCM 11309 / KCTC 3954 / HTE831).